A 187-amino-acid chain; its full sequence is MASPNRLIVAVTGLPGSGKSVVARIVAEELGLEVKVMGDVVREETVRRGLEPTPENVERVARMLREELGRAAVAKLLAERLEPGRSYVLDGLRSVEEAEVLARAGWRVFIIGVYAPRKQRLERLMRRRRSGETLWEVLELRDASNIELGVGEALALSDYLIVNTGSLEDLEFEARRAARVAICGGDP.

An ATP-binding site is contributed by 13–20; sequence GLPGSGKS.

Belongs to the UPF0200 family.

The chain is UPF0200 protein APE_1753.1 from Aeropyrum pernix (strain ATCC 700893 / DSM 11879 / JCM 9820 / NBRC 100138 / K1).